The primary structure comprises 93 residues: Integration host factor subunit beta (93 aa).

The protein belongs to the bacterial histone-like protein family. Heterodimer of an alpha and a beta chain.

Functionally, this protein is one of the two subunits of integration host factor, a specific DNA-binding protein that functions in genetic recombination as well as in transcriptional and translational control. This is Integration host factor subunit beta from Cereibacter sphaeroides (strain KD131 / KCTC 12085) (Rhodobacter sphaeroides).